Here is a 416-residue protein sequence, read N- to C-terminus: Gamma-glutamyl phosphate reductase (416 aa).

It belongs to the gamma-glutamyl phosphate reductase family.

The protein localises to the cytoplasm. It catalyses the reaction L-glutamate 5-semialdehyde + phosphate + NADP(+) = L-glutamyl 5-phosphate + NADPH + H(+). It functions in the pathway amino-acid biosynthesis; L-proline biosynthesis; L-glutamate 5-semialdehyde from L-glutamate: step 2/2. In terms of biological role, catalyzes the NADPH-dependent reduction of L-glutamate 5-phosphate into L-glutamate 5-semialdehyde and phosphate. The product spontaneously undergoes cyclization to form 1-pyrroline-5-carboxylate. The chain is Gamma-glutamyl phosphate reductase from Vibrio cholerae serotype O1 (strain ATCC 39541 / Classical Ogawa 395 / O395).